The chain runs to 448 residues: RNA-binding protein 42 (448 aa).

A disordered region spans residues 1–29 (MAGAGPAPGLPGAGGPVVPGPGAGIPGKS). A2 is modified (N-acetylalanine). A compositionally biased stretch (gly residues) spans 11 to 27 (PGAGGPVVPGPGAGIPG). A Phosphoserine modification is found at S132. At R149 the chain carries Asymmetric dimethylarginine. A necessary for interaction with HNRNPK region spans residues 204 to 448 (ELGLGLGLGL…QKEKKKLGLR (245 aa)). Residues 286–324 (LSLRPRPRPPRPEPPPGLMALEVPEPLSEDKKKGKPEKL) form a disordered region. The span at 313-324 (SEDKKKGKPEKL) shows a compositional bias: basic and acidic residues. The 79-residue stretch at 349–427 (FRIFCGDLGN…RPIKLRKSMW (79 aa)) folds into the RRM domain.

This sequence belongs to the RRM RBM42 family. As to quaternary structure, interacts with HNRNPK.

It is found in the nucleus. The protein localises to the cytoplasm. Functionally, binds (via the RRM domain) to the 3'-untranslated region (UTR) of CDKN1A mRNA. The chain is RNA-binding protein 42 (RBM42) from Bos taurus (Bovine).